The chain runs to 187 residues: Elongation factor P (187 aa).

The protein belongs to the elongation factor P family.

The protein resides in the cytoplasm. It functions in the pathway protein biosynthesis; polypeptide chain elongation. Involved in peptide bond synthesis. Stimulates efficient translation and peptide-bond synthesis on native or reconstituted 70S ribosomes in vitro. Probably functions indirectly by altering the affinity of the ribosome for aminoacyl-tRNA, thus increasing their reactivity as acceptors for peptidyl transferase. This chain is Elongation factor P, found in Leifsonia xyli subsp. xyli (strain CTCB07).